The following is a 494-amino-acid chain: Amidophosphoribosyltransferase (494 aa).

The propeptide occupies 1–10 (MFNYSGLNEE). C11 functions as the Nucleophile in the catalytic mechanism. One can recognise a Glutamine amidotransferase type-2 domain in the interval 11–231 (CGVFGIWNHP…AGEYVVINDK (221 aa)). Mg(2+) is bound by residues S294, D356, and D357.

In the C-terminal section; belongs to the purine/pyrimidine phosphoribosyltransferase family. Mg(2+) is required as a cofactor.

The enzyme catalyses 5-phospho-beta-D-ribosylamine + L-glutamate + diphosphate = 5-phospho-alpha-D-ribose 1-diphosphate + L-glutamine + H2O. It functions in the pathway purine metabolism; IMP biosynthesis via de novo pathway; N(1)-(5-phospho-D-ribosyl)glycinamide from 5-phospho-alpha-D-ribose 1-diphosphate: step 1/2. In terms of biological role, catalyzes the formation of phosphoribosylamine from phosphoribosylpyrophosphate (PRPP) and glutamine. This is Amidophosphoribosyltransferase from Staphylococcus aureus (strain MRSA252).